A 246-amino-acid chain; its full sequence is Small ribosomal subunit protein uS2 (246 aa).

It belongs to the universal ribosomal protein uS2 family.

The sequence is that of Small ribosomal subunit protein uS2 from Lachnoclostridium phytofermentans (strain ATCC 700394 / DSM 18823 / ISDg) (Clostridium phytofermentans).